The primary structure comprises 284 residues: NAD/NADP-dependent indole-3-acetaldehyde reductase (284 aa).

An NADPH-binding site is contributed by D49. Catalysis depends on proton donor residues Y54 and H109. NADPH is bound by residues S143, Q165, L196, R201, T239, T240, T241, S242, K243, and R246.

Belongs to the aldo/keto reductase family. As to quaternary structure, monomer.

The protein localises to the cytoplasm. Its subcellular location is the nucleus. The enzyme catalyses indole-3-ethanol + NAD(+) = indole-3-acetaldehyde + NADH + H(+). It catalyses the reaction indole-3-ethanol + NADP(+) = indole-3-acetaldehyde + NADPH + H(+). This is NAD/NADP-dependent indole-3-acetaldehyde reductase from Schizosaccharomyces pombe (strain 972 / ATCC 24843) (Fission yeast).